The primary structure comprises 445 residues: Cholesterol side-chain cleavage enzyme, mitochondrial (445 aa).

Residues 1–36 constitute a mitochondrion transit peptide; that stretch reads RGLPSRSVFLRGCQASLSTAQERLGHPGVPTREGVR.

This sequence belongs to the cytochrome P450 family. In terms of assembly, interacts with FDX1/adrenodoxin. Heme serves as cofactor.

The protein localises to the mitochondrion inner membrane. It carries out the reaction 6 reduced [adrenodoxin] + cholesterol + 3 O2 + 6 H(+) = 4-methylpentanal + pregnenolone + 6 oxidized [adrenodoxin] + 4 H2O. It catalyses the reaction 2 reduced [adrenodoxin] + cholesterol + O2 + 2 H(+) = (22R)-hydroxycholesterol + 2 oxidized [adrenodoxin] + H2O. The catalysed reaction is (22R)-hydroxycholesterol + 2 reduced [adrenodoxin] + O2 + 2 H(+) = (20R,22R)-20,22-dihydroxycholesterol + 2 oxidized [adrenodoxin] + H2O. The enzyme catalyses (20R,22R)-20,22-dihydroxycholesterol + 2 reduced [adrenodoxin] + O2 + 2 H(+) = 4-methylpentanal + pregnenolone + 2 oxidized [adrenodoxin] + 2 H2O. It participates in lipid metabolism; C21-steroid hormone metabolism. It functions in the pathway steroid metabolism; cholesterol metabolism. A cytochrome P450 monooxygenase that catalyzes the side-chain hydroxylation and cleavage of cholesterol to pregnenolone, the precursor of most steroid hormones. Catalyzes three sequential oxidation reactions of cholesterol, namely the hydroxylation at C22 followed with the hydroxylation at C20 to yield 20R,22R-hydroxycholesterol that is further cleaved between C20 and C22 to yield the C21-steroid pregnenolone and 4-methylpentanal. Mechanistically, uses molecular oxygen inserting one oxygen atom into a substrate and reducing the second into a water molecule. Two electrons are provided by NADPH via a two-protein mitochondrial transfer system comprising flavoprotein FDXR (adrenodoxin/ferredoxin reductase) and nonheme iron-sulfur protein FDX1 or FDX2 (adrenodoxin/ferredoxin). This is Cholesterol side-chain cleavage enzyme, mitochondrial (CYP11A1) from Oryctolagus cuniculus (Rabbit).